The primary structure comprises 165 residues: Probable velvet family sexual development regulator CC1G_12219 (165 aa).

The Velvet domain occupies 1 to 121; the sequence is MSNTDAQTSF…SVWGAQVNVR (121 aa).

It belongs to the velvet family.

It localises to the nucleus. Functionally, velvet-domain-containing protein that probably acts as a positive regulator of sexual development. In Coprinopsis cinerea (strain Okayama-7 / 130 / ATCC MYA-4618 / FGSC 9003) (Inky cap fungus), this protein is Probable velvet family sexual development regulator CC1G_12219.